Here is a 140-residue protein sequence, read N- to C-terminus: Class I hydrophobin B (140 aa).

Residues 1-16 form the signal peptide; sequence MKFLAVVSLLAATALA. Disulfide bonds link Cys42/Cys113, Cys50/Cys107, Cys51/Cys88, and Cys114/Cys133. A glycan (N-linked (GlcNAc...) asparagine) is linked at Asn117.

Belongs to the fungal hydrophobin family. In terms of assembly, self-assembles to form functional amyloid fibrils called rodlets. Self-assembly into fibrillar rodlets occurs spontaneously at hydrophobic:hydrophilic interfaces and the rodlets further associate laterally to form amphipathic monolayers.

The protein localises to the secreted. It is found in the spore wall. Functionally, aerial growth, conidiation, and dispersal of filamentous fungi in the environment rely upon a capability of their secreting small amphipathic proteins called hydrophobins (HPBs) with low sequence identity. Class I can self-assemble into an outermost layer of rodlet bundles on aerial cell surfaces, conferring cellular hydrophobicity that supports fungal growth, development and dispersal; whereas Class II form highly ordered films at water-air interfaces through intermolecular interactions but contribute nothing to the rodlet structure. RodB is a class I hydrophobin that, unlike rodA, is not required for rodlet formation. The chain is Class I hydrophobin B from Aspergillus fumigatus (strain ATCC MYA-4609 / CBS 101355 / FGSC A1100 / Af293) (Neosartorya fumigata).